Here is a 756-residue protein sequence, read N- to C-terminus: Catalase-peroxidase (756 aa).

A cross-link (tryptophyl-tyrosyl-methioninium (Trp-Tyr) (with M-270)) is located at residues 91-244; it reads WHSAGTYRTG…LAAVQMGLIY (154 aa). Catalysis depends on H92, which acts as the Proton acceptor. Positions 198–230 are disordered; sequence AQKKMQQPGDGTLVAEPENHANEESRTASGERN. The segment covering 214–223 has biased composition (basic and acidic residues); it reads PENHANEESR. A cross-link (tryptophyl-tyrosyl-methioninium (Tyr-Met) (with W-91)) is located at residues 244-270; sequence YVNPEGPEGVPDPVASARDIRETFGRM. H285 serves as a coordination point for heme b.

It belongs to the peroxidase family. Peroxidase/catalase subfamily. As to quaternary structure, homodimer or homotetramer. It depends on heme b as a cofactor. Formation of the three residue Trp-Tyr-Met cross-link is important for the catalase, but not the peroxidase activity of the enzyme.

The catalysed reaction is H2O2 + AH2 = A + 2 H2O. It carries out the reaction 2 H2O2 = O2 + 2 H2O. Bifunctional enzyme with both catalase and broad-spectrum peroxidase activity. In Pseudomonas syringae pv. syringae (strain B728a), this protein is Catalase-peroxidase.